The sequence spans 309 residues: Bifunctional methylenetetrahydrofolate dehydrogenase/cyclohydrolase, mitochondrial (309 aa).

Belongs to the tetrahydrofolate dehydrogenase/cyclohydrolase family. Homodimer. Requires Mg(2+) as cofactor.

The protein localises to the mitochondrion. The enzyme catalyses (6R)-5,10-methylene-5,6,7,8-tetrahydrofolate + NAD(+) = (6R)-5,10-methenyltetrahydrofolate + NADH. The catalysed reaction is (6R)-5,10-methenyltetrahydrofolate + H2O = (6R)-10-formyltetrahydrofolate + H(+). Functionally, may play a role in spermatogenesis. This chain is Bifunctional methylenetetrahydrofolate dehydrogenase/cyclohydrolase, mitochondrial (Nmdmc), found in Drosophila melanogaster (Fruit fly).